Here is a 931-residue protein sequence, read N- to C-terminus: Isoleucine--tRNA ligase (931 aa).

Positions 57–67 (PFANGNIHMGH) match the 'HIGH' region motif. L-isoleucyl-5'-AMP is bound at residue Glu556. Positions 597-601 (KMSKS) match the 'KMSKS' region motif. Lys600 lines the ATP pocket. Zn(2+)-binding residues include Cys890, Cys893, Cys910, and Cys913.

The protein belongs to the class-I aminoacyl-tRNA synthetase family. IleS type 1 subfamily. As to quaternary structure, monomer. Zn(2+) is required as a cofactor.

Its subcellular location is the cytoplasm. The catalysed reaction is tRNA(Ile) + L-isoleucine + ATP = L-isoleucyl-tRNA(Ile) + AMP + diphosphate. Its function is as follows. Catalyzes the attachment of isoleucine to tRNA(Ile). As IleRS can inadvertently accommodate and process structurally similar amino acids such as valine, to avoid such errors it has two additional distinct tRNA(Ile)-dependent editing activities. One activity is designated as 'pretransfer' editing and involves the hydrolysis of activated Val-AMP. The other activity is designated 'posttransfer' editing and involves deacylation of mischarged Val-tRNA(Ile). In Lactobacillus delbrueckii subsp. bulgaricus (strain ATCC 11842 / DSM 20081 / BCRC 10696 / JCM 1002 / NBRC 13953 / NCIMB 11778 / NCTC 12712 / WDCM 00102 / Lb 14), this protein is Isoleucine--tRNA ligase.